Consider the following 1144-residue polypeptide: MDSVIIEPDEREALASLVPAHPLPPRKTHSYVEQCEQKPHHPIRKYSLDEGSRSVTSDSEAVYFDSSDGEFSTEGVAIVDGRTSGERGNGEECGFVTPPSKPASQGGGNDGGREDDIESLPEFIGAGGGLDVFKVPVRAAVNPGRPPCLELRPHPLRETQTGKFLRNIACTESQLWAGQENGVRFWNLEEAYEVGCGLGGQVRRGDEDTAPFHESVPTSPALCLLVDHGNRLVWTGHKDGKIRAWKMNQPNTTTADDSKPFKERLSWQAHRGPVNYIVISSYGDMWSCSDGGVIKIWTLDSLEKSLVLKLEEKHMAALLVERSGIDLRSQVTVNGTCSISSSDVKFLLVDTVKAKVWAVQHLSFSLWDAQNKELLKVFNIDGQVENRVDMPPTQGQQVEDTKAKFFSAPKKEKSQGFLQRSRHAIMGAAGAVRRAATRSAGAFAEDTRKVEAIAIAADGSIWTGSMNGVIAQWDGNGSRLREVNHHQQAVLCFCTFGDRIYVGYSSGYIQVLDLGGKLIASWVSHNEPVIKLAAGGGFIFSLATHGGVRGWYVTSPGPLDSLIRTELSQKEMAYARQDSVKILIGTWNVGEGRASRGALVSWLGSAVSDVGIVAIGLQEVDMGAGFLAMSTAKETVGVEGSAVGQWWLDAIGNALDERNTFERMGSRQLAGLLISLWVRKSIRTHVGDLDVAAVPCGFGRAIGNKGGVGLRIRVYDRIMCFVNCHLAAHLEAVTRRNADFNHIYRSMVFSKGQSVYTAAAAGASTSAQALKNNPNTNNSTEEEKSHLASADLVAFFGDFNYRLFGITYDEARDFISHRSFDWLREKDQLRQEMNEGKVFQGMREALITFPPTYKFEKNKPGLGGYDSGEKKRIPAWCDRVIYRDNQSISYTECSLKCPVVSSTIMYEACMDVTESDHKPVRCKLHANIAHTDKSVRRQELGKIVKSNEKLRAMFEELKSVPETSVSTNNILLHSQDTFIFTIRNTSNSSRAIFNIVCKGQTLVREDGEEPDNHSRGTFGLPRWLEVSPGAGIIKPDASLQVKVHHEDSHNSEEFIDGIQQNSLSEESSDKEVTLIIIVQGSCSTRTISHSIKVRHCSSAAKSLSLVHSKTTTMTKNLEGSTRYQTDANRGGSTRHRTDDSTRRG.

2 disordered regions span residues 15-67 (ASLV…FDSS) and 81-118 (GRTS…DDIE). WD repeat units follow at residues 158–196 (ETQT…EVGC), 216–255 (VPTS…TTTA), 269–307 (AHRG…KSLV), 445–483 (EDTR…LREV), and 524–561 (SHNE…PLDS). Catalytic stretches follow at residues 791 to 807 (DLVA…FGIT) and 870 to 885 (KKRI…YRDN). A Glycyl lysine isopeptide (Lys-Gly) (interchain with G-Cter in ubiquitin) cross-link involves residue K949. A compositionally biased stretch (polar residues) spans 1111 to 1131 (TTMTKNLEGSTRYQTDANRGG). The segment at 1111 to 1144 (TTMTKNLEGSTRYQTDANRGGSTRHRTDDSTRRG) is disordered. Residues 1135–1144 (HRTDDSTRRG) are compositionally biased toward basic and acidic residues.

Belongs to the inositol polyphosphate 5-phosphatase family. Mg(2+) serves as cofactor. In terms of tissue distribution, expressed in young seedlings and flowers.

It carries out the reaction a 1,2-diacyl-sn-glycero-3-phospho-(1D-myo-inositol-4,5-bisphosphate) + H2O = a 1,2-diacyl-sn-glycero-3-phospho-(1D-myo-inositol 4-phosphate) + phosphate. The enzyme catalyses a 1,2-diacyl-sn-glycero-3-phospho-(1D-myo-inositol-3,4,5-trisphosphate) + H2O = a 1,2-diacyl-sn-glycero-3-phospho-(1D-myo-inositol-3,4-bisphosphate) + phosphate. It catalyses the reaction 1D-myo-inositol 1,4,5-trisphosphate + H2O = 1D-myo-inositol 1,4-bisphosphate + phosphate. In terms of biological role, has phosphatase activity toward PtdIns(4,5)P2, PtdIns(3,4,5)P3 and Ins(1,4,5)P3. This Arabidopsis thaliana (Mouse-ear cress) protein is Type II inositol polyphosphate 5-phosphatase 14.